A 413-amino-acid chain; its full sequence is Methylaspartate ammonia-lyase (413 aa).

Gln-172 contacts (2S,3S)-3-methyl-L-aspartate. Mg(2+) contacts are provided by Asp-238, Glu-273, and Asp-307. (2S,3S)-3-methyl-L-aspartate is bound at residue Gln-329. Lys-331 (proton acceptor) is an active-site residue. (2S,3S)-3-methyl-L-aspartate is bound at residue Thr-360–Cys-361.

This sequence belongs to the methylaspartate ammonia-lyase family. Homodimer. Mg(2+) serves as cofactor.

It carries out the reaction (2S,3S)-3-methyl-L-aspartate = mesaconate + NH4(+). It functions in the pathway amino-acid degradation; L-glutamate degradation via mesaconate pathway; acetate and pyruvate from L-glutamate: step 2/4. Involved in the methylaspartate cycle. Catalyzes the formation of the alpha,beta-unsaturated bond by the reversible anti elimination of ammonia from L-threo-beta-methylaspartate (L-threo-(2S,3S)-3-methylaspartate) to give mesaconate. The chain is Methylaspartate ammonia-lyase from Citrobacter amalonaticus.